The sequence spans 295 residues: Ribosomal RNA small subunit methyltransferase A (295 aa).

Residues asparagine 31, leucine 33, glycine 58, glutamate 79, aspartate 104, and asparagine 129 each contribute to the S-adenosyl-L-methionine site.

It belongs to the class I-like SAM-binding methyltransferase superfamily. rRNA adenine N(6)-methyltransferase family. RsmA subfamily.

The protein resides in the cytoplasm. It carries out the reaction adenosine(1518)/adenosine(1519) in 16S rRNA + 4 S-adenosyl-L-methionine = N(6)-dimethyladenosine(1518)/N(6)-dimethyladenosine(1519) in 16S rRNA + 4 S-adenosyl-L-homocysteine + 4 H(+). Its function is as follows. Specifically dimethylates two adjacent adenosines (A1518 and A1519) in the loop of a conserved hairpin near the 3'-end of 16S rRNA in the 30S particle. May play a critical role in biogenesis of 30S subunits. The protein is Ribosomal RNA small subunit methyltransferase A of Leuconostoc mesenteroides subsp. mesenteroides (strain ATCC 8293 / DSM 20343 / BCRC 11652 / CCM 1803 / JCM 6124 / NCDO 523 / NBRC 100496 / NCIMB 8023 / NCTC 12954 / NRRL B-1118 / 37Y).